Here is a 175-residue protein sequence, read N- to C-terminus: Putative adenylate cyclase MJ0240 (175 aa).

Positions 1–175 (MIEVEIKVKI…RKSYLELRGL (175 aa)) constitute a CYTH domain. Y37 functions as the Proton acceptor in the catalytic mechanism.

It belongs to the adenylyl cyclase CyaB family.

The protein resides in the cytoplasm. The enzyme catalyses ATP = 3',5'-cyclic AMP + diphosphate. Its function is as follows. Could catalyze the biosynthesis of cyclic AMP (cAMP) from ATP. The polypeptide is Putative adenylate cyclase MJ0240 (Methanocaldococcus jannaschii (strain ATCC 43067 / DSM 2661 / JAL-1 / JCM 10045 / NBRC 100440) (Methanococcus jannaschii)).